Here is a 295-residue protein sequence, read N- to C-terminus: Small ribosomal subunit biogenesis GTPase RsgA (295 aa).

The region spanning K68–L228 is the CP-type G domain. GTP-binding positions include N117 to D120 and G170 to S178. Zn(2+)-binding residues include C250, C255, H257, and C263.

The protein belongs to the TRAFAC class YlqF/YawG GTPase family. RsgA subfamily. In terms of assembly, monomer. Associates with 30S ribosomal subunit, binds 16S rRNA. Requires Zn(2+) as cofactor.

The protein resides in the cytoplasm. Its function is as follows. One of several proteins that assist in the late maturation steps of the functional core of the 30S ribosomal subunit. Helps release RbfA from mature subunits. May play a role in the assembly of ribosomal proteins into the subunit. Circularly permuted GTPase that catalyzes slow GTP hydrolysis, GTPase activity is stimulated by the 30S ribosomal subunit. This Thermotoga neapolitana (strain ATCC 49049 / DSM 4359 / NBRC 107923 / NS-E) protein is Small ribosomal subunit biogenesis GTPase RsgA.